The sequence spans 358 residues: Peptide chain release factor 1 (358 aa).

The residue at position 234 (Gln234) is an N5-methylglutamine. The interval 283-306 is disordered; it reads ERLHSERAGQRKSMVGSGDRSERI.

It belongs to the prokaryotic/mitochondrial release factor family. Methylated by PrmC. Methylation increases the termination efficiency of RF1.

The protein resides in the cytoplasm. Its function is as follows. Peptide chain release factor 1 directs the termination of translation in response to the peptide chain termination codons UAG and UAA. This is Peptide chain release factor 1 from Zymomonas mobilis subsp. mobilis (strain ATCC 31821 / ZM4 / CP4).